We begin with the raw amino-acid sequence, 207 residues long: Uracil phosphoribosyltransferase (207 aa).

5-phospho-alpha-D-ribose 1-diphosphate contacts are provided by residues R77, R102, and 129-137 (DPMLATGGS). Uracil is bound by residues I192 and 197–199 (GDA). D198 lines the 5-phospho-alpha-D-ribose 1-diphosphate pocket.

The protein belongs to the UPRTase family. Requires Mg(2+) as cofactor.

It catalyses the reaction UMP + diphosphate = 5-phospho-alpha-D-ribose 1-diphosphate + uracil. The protein operates within pyrimidine metabolism; UMP biosynthesis via salvage pathway; UMP from uracil: step 1/1. Allosterically activated by GTP. Catalyzes the conversion of uracil and 5-phospho-alpha-D-ribose 1-diphosphate (PRPP) to UMP and diphosphate. This chain is Uracil phosphoribosyltransferase, found in Dictyoglomus turgidum (strain DSM 6724 / Z-1310).